The primary structure comprises 433 residues: Homoserine O-acetyltransferase (433 aa).

In terms of domain architecture, AB hydrolase-1 spans 41-385 (NVVLVCHALT…HGHDAFLVEP (345 aa)). The tract at residues 55–74 (VARSPAPERNEGTRGAGQAG) is disordered. Residue Ser-166 is the Nucleophile of the active site. Residue Arg-237 coordinates substrate. Catalysis depends on residues Asp-345 and His-378. Residue Asp-379 coordinates substrate. The tract at residues 403-433 (RAVSDDGGGGGNDSARPERDHAPVHASLFKG) is disordered.

Belongs to the AB hydrolase superfamily. MetX family. In terms of assembly, homodimer.

The protein resides in the cytoplasm. It carries out the reaction L-homoserine + acetyl-CoA = O-acetyl-L-homoserine + CoA. The protein operates within amino-acid biosynthesis; L-methionine biosynthesis via de novo pathway; O-acetyl-L-homoserine from L-homoserine: step 1/1. Functionally, transfers an acetyl group from acetyl-CoA to L-homoserine, forming acetyl-L-homoserine. The chain is Homoserine O-acetyltransferase from Halorubrum lacusprofundi (strain ATCC 49239 / DSM 5036 / JCM 8891 / ACAM 34).